Here is a 635-residue protein sequence, read N- to C-terminus: Probable potassium transport system protein Kup (635 aa).

The next 12 membrane-spanning stretches (helical) occupy residues 22-42 (LVIGAIGVVFGDIGTSPLYTL), 59-79 (VLGILSLVFWALMLVVTLKYV), 111-131 (MYVVGILGIFGASLFFGDGVI), 148-168 (APKLEAFVVPITLVVLGMLFL), 180-200 (AFGPITLVWFFALGAIGVYNM), 216-236 (VLFFVEHNWHAVFVLGAVVLA), 259-279 (WQFVVLPMLTLTYLGQGALVL), 297-317 (ALYPMIVLATAATVIASQALI), 349-369 (IYVPAVNWCLLLAVAVAVVGF), 378-398 (AYGVSVTGTMLITTVLMVIYA), 404-424 (VPAPLLWLFALVFLAVDCAFF), and 428-448 (IIKFLDGAWFPLLLGLILFTL).

This sequence belongs to the HAK/KUP transporter (TC 2.A.72) family.

Its subcellular location is the cell inner membrane. The catalysed reaction is K(+)(in) + H(+)(in) = K(+)(out) + H(+)(out). Transport of potassium into the cell. Likely operates as a K(+):H(+) symporter. The sequence is that of Probable potassium transport system protein Kup from Xanthomonas oryzae pv. oryzae (strain KACC10331 / KXO85).